The chain runs to 338 residues: Taste receptor type 2 member 39 (338 aa).

The Extracellular portion of the chain corresponds to 1 to 30 (MLGRCFPPDTKEKQQLRMTKLCDPAESELS). The helical transmembrane segment at 31-51 (PFLITLILAVLLAEYLIGIIA) threads the bilayer. Residues 52–74 (NGFIMAIHAAEWVQNKAVSTSGR) lie on the Cytoplasmic side of the membrane. The helical transmembrane segment at 75–95 (ILVFLSVSRIALQSLMMLEIT) threads the bilayer. Residues 96–116 (ISSTSLSFYSEDAVYYAFKIS) are Extracellular-facing. A helical membrane pass occupies residues 117 to 137 (FIFLNFCSLWFAAWLSFFYFV). Over 138–156 (KIANFSYPLFLKLRWRITG) the chain is Cytoplasmic. A helical membrane pass occupies residues 157 to 177 (LIPWLLWLSVFISFSHSMFCI). The Extracellular portion of the chain corresponds to 178–205 (NIXTVYCNNSFPIHSSNSTKKTYLSEIN). 2 N-linked (GlcNAc...) asparagine glycosylation sites follow: asparagine 185 and asparagine 194. A helical membrane pass occupies residues 206–226 (VVGLAFFFNLGIVTPLIMFIL). Over 227-262 (TATLLILSLKRHTLHMGSNATGSNDPSMEAHMGAIK) the chain is Cytoplasmic. The helical transmembrane segment at 263–283 (ATSYFLILYIFNAVALFIYLS) threads the bilayer. At 284 to 291 (NMFDINSL) the chain is on the extracellular side. A helical membrane pass occupies residues 292–312 (WNNLCQIIMAAYPASHSILLI). The Cytoplasmic segment spans residues 313–338 (QDNPGLRRAWKRLQLRLHLYPKEWTL).

The protein belongs to the G-protein coupled receptor T2R family.

Its subcellular location is the membrane. Functionally, receptor that may play a role in the perception of bitterness and is gustducin-linked. May play a role in sensing the chemical composition of the gastrointestinal content. The activity of this receptor may stimulate alpha gustducin, mediate PLC-beta-2 activation and lead to the gating of TRPM5. This chain is Taste receptor type 2 member 39 (TAS2R39), found in Gorilla gorilla gorilla (Western lowland gorilla).